Consider the following 295-residue polypeptide: Shikimate dehydrogenase (NADP(+)) (295 aa).

Residues 24–26 (SRS) and Thr71 contribute to the shikimate site. Lys75 serves as the catalytic Proton acceptor. NADP(+) is bound at residue Glu87. Shikimate-binding residues include Asn96 and Asp111. NADP(+) contacts are provided by residues 136–140 (GAGGA), 160–165 (NRTASR), and Met233. Residue Tyr235 participates in shikimate binding. NADP(+) is bound at residue Gly256.

It belongs to the shikimate dehydrogenase family. In terms of assembly, homodimer.

The enzyme catalyses shikimate + NADP(+) = 3-dehydroshikimate + NADPH + H(+). It functions in the pathway metabolic intermediate biosynthesis; chorismate biosynthesis; chorismate from D-erythrose 4-phosphate and phosphoenolpyruvate: step 4/7. In terms of biological role, involved in the biosynthesis of the chorismate, which leads to the biosynthesis of aromatic amino acids. Catalyzes the reversible NADPH linked reduction of 3-dehydroshikimate (DHSA) to yield shikimate (SA). The chain is Shikimate dehydrogenase (NADP(+)) from Cupriavidus taiwanensis (strain DSM 17343 / BCRC 17206 / CCUG 44338 / CIP 107171 / LMG 19424 / R1) (Ralstonia taiwanensis (strain LMG 19424)).